We begin with the raw amino-acid sequence, 122 residues long: Large ribosomal subunit protein uL14c (122 aa).

Belongs to the universal ribosomal protein uL14 family. In terms of assembly, part of the 50S ribosomal subunit.

It is found in the plastid. The protein resides in the chloroplast. Functionally, binds to 23S rRNA. The polypeptide is Large ribosomal subunit protein uL14c (Oenothera biennis (German evening primrose)).